A 555-amino-acid chain; its full sequence is MVKRGKKTKYLFVTGGVVSSLGKGLSAASIGALLENRGLEVQHLKLDPYINVDPGTMSPFQHGEVFVTDDGAETDLDLGHYERFTSAKMTRRNNYTTGRIYQNVIQRERRGEYLGKTVQVIPHITDEIKAVIREAAGGADILIVEVGGTVGDIESLPFLEAIRQMKYDVGEENAVYAHLTLVPFIAAAGELKTKPTQHSVKELREIGIQPDLLLCRSDREIPRDMKDKIALFCNVDPSAVFTALDVPSIYEVPLSLHREGLDDKLAELFNIWSRAPRLERWETIVDKVKNPRRGEVRIGIVGKYVELHESYKSLNEALVHGGIANDARVKLAFIDSTKLEEGDLSDLDKVDAILVPGGFGIRGTEGKILGVKYAREHKVPFFGICLGLQMAVIEMARNVLGLAGANSLEFDEQTPHPVVTLMEGQKGVTDKGGTMRLGAYPCALKEGTKARALYGADLVHERHRHRFEFNNDYRAQFEAAGMVFSGVNPDLGLVEMIELPGQHFVGCQFHPEFRSKPFAPHPLFAGFVKAALEHRDAQQRQPSAEVKKLPVGKNG.

The interval 1 to 271 (MVKRGKKTKY…DDKLAELFNI (271 aa)) is amidoligase domain. CTP is bound at residue serine 19. Position 19 (serine 19) interacts with UTP. ATP-binding positions include 20 to 25 (SLGKGL) and aspartate 77. Residues aspartate 77 and glutamate 145 each contribute to the Mg(2+) site. CTP-binding positions include 152–154 (DIE), 192–197 (KTKPTQ), and lysine 228. Residues 192 to 197 (KTKPTQ) and lysine 228 contribute to the UTP site. The Glutamine amidotransferase type-1 domain maps to 297 to 537 (RIGIVGKYVE…VKAALEHRDA (241 aa)). Glycine 358 serves as a coordination point for L-glutamine. The active-site Nucleophile; for glutamine hydrolysis is cysteine 385. Residues 386–389 (LGLQ), glutamate 409, and arginine 466 contribute to the L-glutamine site. Active-site residues include histidine 510 and glutamate 512. The segment at 536 to 555 (DAQQRQPSAEVKKLPVGKNG) is disordered.

This sequence belongs to the CTP synthase family. Homotetramer.

It carries out the reaction UTP + L-glutamine + ATP + H2O = CTP + L-glutamate + ADP + phosphate + 2 H(+). The enzyme catalyses L-glutamine + H2O = L-glutamate + NH4(+). The catalysed reaction is UTP + NH4(+) + ATP = CTP + ADP + phosphate + 2 H(+). The protein operates within pyrimidine metabolism; CTP biosynthesis via de novo pathway; CTP from UDP: step 2/2. With respect to regulation, allosterically activated by GTP, when glutamine is the substrate; GTP has no effect on the reaction when ammonia is the substrate. The allosteric effector GTP functions by stabilizing the protein conformation that binds the tetrahedral intermediate(s) formed during glutamine hydrolysis. Inhibited by the product CTP, via allosteric rather than competitive inhibition. Its function is as follows. Catalyzes the ATP-dependent amination of UTP to CTP with either L-glutamine or ammonia as the source of nitrogen. Regulates intracellular CTP levels through interactions with the four ribonucleotide triphosphates. The sequence is that of CTP synthase from Anaeromyxobacter dehalogenans (strain 2CP-C).